The following is a 126-amino-acid chain: Large ribosomal subunit protein bL12 (126 aa).

It belongs to the bacterial ribosomal protein bL12 family. Homodimer. Part of the ribosomal stalk of the 50S ribosomal subunit. Forms a multimeric L10(L12)X complex, where L10 forms an elongated spine to which 2 to 4 L12 dimers bind in a sequential fashion. Binds GTP-bound translation factors.

Its function is as follows. Forms part of the ribosomal stalk which helps the ribosome interact with GTP-bound translation factors. Is thus essential for accurate translation. This is Large ribosomal subunit protein bL12 from Geobacter sp. (strain M21).